We begin with the raw amino-acid sequence, 360 residues long: Phospho-N-acetylmuramoyl-pentapeptide-transferase (360 aa).

The next 10 helical transmembrane spans lie at 21 to 41, 71 to 91, 94 to 114, 142 to 162, 168 to 188, 199 to 219, 236 to 256, 263 to 283, 288 to 308, and 338 to 358; these read YLTF…LWIG, TPTM…ILWA, SNPY…IGFI, LVVA…VLVV, IMPQ…VGAS, GLAI…AWAT, ASEL…FLWF, VFMG…IAVL, FLLF…ILQV, and VIVR…VTLK.

It belongs to the glycosyltransferase 4 family. MraY subfamily. Mg(2+) is required as a cofactor.

The protein resides in the cell inner membrane. The enzyme catalyses UDP-N-acetyl-alpha-D-muramoyl-L-alanyl-gamma-D-glutamyl-meso-2,6-diaminopimeloyl-D-alanyl-D-alanine + di-trans,octa-cis-undecaprenyl phosphate = di-trans,octa-cis-undecaprenyl diphospho-N-acetyl-alpha-D-muramoyl-L-alanyl-D-glutamyl-meso-2,6-diaminopimeloyl-D-alanyl-D-alanine + UMP. It participates in cell wall biogenesis; peptidoglycan biosynthesis. Catalyzes the initial step of the lipid cycle reactions in the biosynthesis of the cell wall peptidoglycan: transfers peptidoglycan precursor phospho-MurNAc-pentapeptide from UDP-MurNAc-pentapeptide onto the lipid carrier undecaprenyl phosphate, yielding undecaprenyl-pyrophosphoryl-MurNAc-pentapeptide, known as lipid I. This chain is Phospho-N-acetylmuramoyl-pentapeptide-transferase, found in Tolumonas auensis (strain DSM 9187 / NBRC 110442 / TA 4).